A 247-amino-acid polypeptide reads, in one-letter code: TLC domain-containing protein 1 (247 aa).

The N-terminal stretch at 1 to 27 (MPLLFHPAWPLLLGATLTFRALRRVLC) is a signal peptide. Residues 28–46 (RLPQPAHVQTDPLRTWRWH) are Extracellular-facing. The region spanning 40–234 (LRTWRWHNLL…LLRSDFCPER (195 aa)) is the TLC domain. The chain crosses the membrane as a helical span at residues 47 to 67 (NLLVSFTHSIVSGIWALLCLW). At 68-83 (QTPEMLVEIETAWSAS) the chain is on the cytoplasmic side. Residues 84–104 (GYLLVCFSAGYFIHDTVDIVV) form a helical membrane-spanning segment. At 105-123 (SKQTRASWEYLVHHVMAMG) the chain is on the extracellular side. Residues 124–144 (AFFSGIFWKRFVGGGVLTLLV) constitute an intramembrane region (helical). The Extracellular segment spans residues 145-173 (EVSNIFLTLRMMMKINNAQDLLLYKVNKY). The chain crosses the membrane as a helical span at residues 174 to 194 (INLVMYFLFRLAPQAYLTKFF). Residues 195–201 (LQYAGQR) are Cytoplasmic-facing. Residues 202-222 (TLGTFLLAILLMLDLMIIIYF) form a helical membrane-spanning segment. At 223–247 (SRLLRSDFCPERAPRRQQKDKFLTE) the chain is on the extracellular side.

It localises to the cell membrane. Its function is as follows. Regulates the composition and fluidity of the plasma membrane. Inhibits the incorporation of membrane-fluidizing phospholipids containing omega-3 long-chain polyunsaturated fatty acids (LCPUFA) and thereby promotes membrane rigidity. Does not appear to have any effect on LCPUFA synthesis. The chain is TLC domain-containing protein 1 (Tlcd1) from Mus musculus (Mouse).